The following is a 192-amino-acid chain: LexA repressor (192 aa).

The H-T-H motif DNA-binding region spans 15 to 35 (RAEIARELGFRSANAAEEHLK). Active-site for autocatalytic cleavage activity residues include S109 and K146.

This sequence belongs to the peptidase S24 family. Homodimer.

It catalyses the reaction Hydrolysis of Ala-|-Gly bond in repressor LexA.. In terms of biological role, represses a number of genes involved in the response to DNA damage (SOS response), including recA and lexA. In the presence of single-stranded DNA, RecA interacts with LexA causing an autocatalytic cleavage which disrupts the DNA-binding part of LexA, leading to derepression of the SOS regulon and eventually DNA repair. The polypeptide is LexA repressor (Photobacterium profundum (strain SS9)).